Consider the following 909-residue polypeptide: ABC transporter B family member 1 (909 aa).

The segment at 1-36 (MTKKNFNDEENESLLETYNKQQQKQSISTTNRSDQK) is disordered. The segment covering 14–36 (LLETYNKQQQKQSISTTNRSDQK) has biased composition (polar residues). A helical membrane pass occupies residues 85–105 (LFIQIVSLVILAGYLISINAL). The segment covering 125-134 (TDSGSVSPTS) has biased composition (low complexity). The tract at residues 125-147 (TDSGSVSPTSTPSPTPTPTPSPT) is disordered. Over residues 135–145 (TPSPTPTPTPS) the composition is skewed to pro residues. 8 consecutive transmembrane segments (helical) span residues 182 to 202 (FSTFDILLISYFISLFWLLLI), 206 to 226 (SFIYHTISYIITIIALIYNVI), 275 to 295 (IIIVIVLVGIPLMVLFLVLHI), 347 to 367 (LPIILAAMVALVFSSLTSLAM), 392 to 412 (LALVVIFVIGSISTLVRSWLF), 480 to 500 (VILLFITNWRLTLLMLGIVPV), 572 to 592 (GVFSGIVFLVAQLAIVLIVYV), and 607 to 627 (LTSFLLYTLSLAMSLAFISSL). The 284-residue stretch at 350–633 (ILAAMVALVF…ISSLMTDFLK (284 aa)) folds into the ABC transmembrane type-1 domain. One can recognise an ABC transporter domain in the interval 666-902 (IELKDVEFSY…TDGIYHNLVK (237 aa)). 701–708 (GPSGGGKS) contributes to the ATP binding site.

The protein belongs to the ABC transporter superfamily. ABCB family.

It localises to the membrane. In Dictyostelium discoideum (Social amoeba), this protein is ABC transporter B family member 1 (abcB1).